The chain runs to 404 residues: Formate-dependent phosphoribosylglycinamide formyltransferase (404 aa).

Residues 27-28 and glutamate 87 each bind N(1)-(5-phospho-beta-D-ribosyl)glycinamide; that span reads EL. ATP is bound by residues arginine 120, lysine 162, 167-172, 202-205, and glutamate 210; these read SSGKGQ and EGFI. Residues 125–320 enclose the ATP-grasp domain; sequence RLAAETLGLP…EFELHARALL (196 aa). Residues glutamate 279 and glutamate 291 each contribute to the Mg(2+) site. N(1)-(5-phospho-beta-D-ribosyl)glycinamide contacts are provided by residues aspartate 298, lysine 367, and 374 to 375; that span reads RR.

Belongs to the PurK/PurT family. As to quaternary structure, homodimer.

It catalyses the reaction N(1)-(5-phospho-beta-D-ribosyl)glycinamide + formate + ATP = N(2)-formyl-N(1)-(5-phospho-beta-D-ribosyl)glycinamide + ADP + phosphate + H(+). The protein operates within purine metabolism; IMP biosynthesis via de novo pathway; N(2)-formyl-N(1)-(5-phospho-D-ribosyl)glycinamide from N(1)-(5-phospho-D-ribosyl)glycinamide (formate route): step 1/1. Its function is as follows. Involved in the de novo purine biosynthesis. Catalyzes the transfer of formate to 5-phospho-ribosyl-glycinamide (GAR), producing 5-phospho-ribosyl-N-formylglycinamide (FGAR). Formate is provided by PurU via hydrolysis of 10-formyl-tetrahydrofolate. The chain is Formate-dependent phosphoribosylglycinamide formyltransferase from Bordetella pertussis (strain Tohama I / ATCC BAA-589 / NCTC 13251).